Reading from the N-terminus, the 140-residue chain is Small ribosomal subunit protein uS12 (140 aa).

The residue at position 102 (Asp-102) is a 3-methylthioaspartic acid.

It belongs to the universal ribosomal protein uS12 family. As to quaternary structure, part of the 30S ribosomal subunit. Contacts proteins S8 and S17. May interact with IF1 in the 30S initiation complex.

In terms of biological role, with S4 and S5 plays an important role in translational accuracy. Interacts with and stabilizes bases of the 16S rRNA that are involved in tRNA selection in the A site and with the mRNA backbone. Located at the interface of the 30S and 50S subunits, it traverses the body of the 30S subunit contacting proteins on the other side and probably holding the rRNA structure together. The combined cluster of proteins S8, S12 and S17 appears to hold together the shoulder and platform of the 30S subunit. This Geobacillus sp. (strain WCH70) protein is Small ribosomal subunit protein uS12.